Here is a 474-residue protein sequence, read N- to C-terminus: 3-isopropylmalate dehydratase large subunit (474 aa).

Positions 355, 415, and 418 each coordinate [4Fe-4S] cluster.

It belongs to the aconitase/IPM isomerase family. LeuC type 1 subfamily. In terms of assembly, heterodimer of LeuC and LeuD. Requires [4Fe-4S] cluster as cofactor.

The enzyme catalyses (2R,3S)-3-isopropylmalate = (2S)-2-isopropylmalate. It functions in the pathway amino-acid biosynthesis; L-leucine biosynthesis; L-leucine from 3-methyl-2-oxobutanoate: step 2/4. Catalyzes the isomerization between 2-isopropylmalate and 3-isopropylmalate, via the formation of 2-isopropylmaleate. The sequence is that of 3-isopropylmalate dehydratase large subunit from Shewanella sp. (strain W3-18-1).